We begin with the raw amino-acid sequence, 101 residues long: Large ribosomal subunit protein bL21 (101 aa).

This sequence belongs to the bacterial ribosomal protein bL21 family. Part of the 50S ribosomal subunit. Contacts protein L20.

This protein binds to 23S rRNA in the presence of protein L20. This is Large ribosomal subunit protein bL21 from Thermus thermophilus (strain ATCC BAA-163 / DSM 7039 / HB27).